Consider the following 365-residue polypeptide: Phosphatidylcholine:ceramide cholinephosphotransferase 2 (365 aa).

The segment at 9–50 is disordered; sequence LEGHLESQTNDSTNTYTSPTEAVEEEGKNGKGKPKTLSNGLR. Polar residues predominate over residues 14–28; sequence ESQTNDSTNTYTSPT. The next 5 membrane-spanning stretches (helical) occupy residues 80–100, 128–148, 159–179, 219–239, and 248–268; these read GIAF…ITVV, FSVS…QWLF, FFFI…VTTL, ILCG…TYLF, and FWWY…CILV. His-229 is an active-site residue. Residues His-272 and Asp-276 contribute to the active site. Residues 273–290 traverse the membrane as a helical segment; it reads YTVDVIIAYYITTRLFWW. Over 291–365 the chain is Cytoplasmic; it reads YHSMANEKNL…KIGEDNEKST (75 aa). S-palmitoyl cysteine attachment occurs at residues Cys-331, Cys-332, Cys-343, and Cys-348.

This sequence belongs to the sphingomyelin synthase family. In terms of processing, palmitoylated on Cys-331, Cys-332, Cys-343 and Cys-348; which plays an important role in plasma membrane localization. As to expression, highest expression is detected in cortical bone, followed by vertebrae, kidney and liver. Expression levels are very low in spleen, muscle, heart, brown fat and thymus. Expressed in macrophages.

The protein localises to the cell membrane. It is found in the golgi apparatus membrane. The catalysed reaction is an N-acylsphing-4-enine + a 1,2-diacyl-sn-glycero-3-phosphocholine = a sphingomyelin + a 1,2-diacyl-sn-glycerol. It catalyses the reaction an N-acylsphinganine + a 1,2-diacyl-sn-glycero-3-phosphocholine = an N-acylsphinganine-1-phosphocholine + a 1,2-diacyl-sn-glycerol. It carries out the reaction an N-acyl-(4R)-4-hydroxysphinganine + a 1,2-diacyl-sn-glycero-3-phosphocholine = an N-acyl-(4R)-4-hydroxysphinganine-phosphocholine + a 1,2-diacyl-sn-glycerol. The enzyme catalyses an N-acylsphing-4-enine + a 1,2-diacyl-sn-glycero-3-phosphoethanolamine = an N-acylsphing-4-enine 1-phosphoethanolamine + a 1,2-diacyl-sn-glycerol. The catalysed reaction is an N-acylsphinganine + a 1,2-diacyl-sn-glycero-3-phosphoethanolamine = an N-acylsphinganine-1-phosphoethanolamine + a 1,2-diacyl-sn-glycerol. It catalyses the reaction an N-acyl-(4R)-4-hydroxysphinganine + a 1,2-diacyl-sn-glycero-3-phosphoethanolamine = an N-acyl-(4R)-4-hydroxysphinganine-1-phosphoethanolamine + a 1,2-diacyl-sn-glycerol. It carries out the reaction 1,2-dihexadecanoyl-sn-glycero-3-phosphocholine + an N-acylsphing-4-enine = 1,2-dihexadecanoyl-sn-glycerol + a sphingomyelin. The enzyme catalyses 1-(9Z-octadecenoyl)-2-acyl-sn-3-glycerol + a sphingomyelin = a 1-(9Z-octadecenoyl)-2-acyl-sn-glycero-3-phosphocholine + an N-acylsphing-4-enine. The catalysed reaction is N-hexadecanoylsphinganine + a 1,2-diacyl-sn-glycero-3-phosphocholine = N-hexadecanoyl-sphinganine-1-phosphocholine + a 1,2-diacyl-sn-glycerol. It catalyses the reaction N-hexadecanoyl-(4R)-hydroxysphinganine + a 1,2-diacyl-sn-glycero-3-phosphocholine = N-hexadecanoyl-(4R)-hydroxysphinganine-phosphocholine + a 1,2-diacyl-sn-glycerol. It carries out the reaction N-hexadecanoylsphinganine + a 1,2-diacyl-sn-glycero-3-phosphoethanolamine = N-hexadecanoyl-sphinganine-1-phosphoethanolamine + a 1,2-diacyl-sn-glycerol. The enzyme catalyses N-hexadecanoyl-(4R)-hydroxysphinganine + a 1,2-diacyl-sn-glycero-3-phosphoethanolamine = N-hexadecanoyl-(4R)-hydroxysphinganine-1-phosphoethanolamine + a 1,2-diacyl-sn-glycerol. Its pathway is sphingolipid metabolism. Sphingomyelin synthase that primarily contributes to sphingomyelin synthesis and homeostasis at the plasma membrane. Catalyzes the reversible transfer of phosphocholine moiety in sphingomyelin biosynthesis: in the forward reaction transfers phosphocholine head group of phosphatidylcholine (PC) on to ceramide (CER) to form ceramide phosphocholine (sphingomyelin, SM) and diacylglycerol (DAG) as by-product, and in the reverse reaction transfers phosphocholine from SM to DAG to form PC and CER. The direction of the reaction appears to depend on the levels of CER and DAG in the plasma membrane. Does not use free phosphorylcholine or CDP-choline as donors. Can also transfer phosphoethanolamine head group of phosphatidylethanolamine (PE) on to ceramide (CER) to form ceramide phosphoethanolamine (CPE). Regulates receptor-mediated signal transduction via mitogenic DAG and proapoptotic CER, as well as via SM, a structural component of membrane rafts that serve as platforms for signal transduction and protein sorting. To a lesser extent, plays a role in secretory transport via regulation of DAG pool at the Golgi apparatus and its downstream effects on PRKD1. Required for normal bone matrix mineralization. The sequence is that of Phosphatidylcholine:ceramide cholinephosphotransferase 2 (Sgms2) from Mus musculus (Mouse).